Here is a 185-residue protein sequence, read N- to C-terminus: Ribosome-recycling factor (185 aa).

This sequence belongs to the RRF family.

It is found in the cytoplasm. In terms of biological role, responsible for the release of ribosomes from messenger RNA at the termination of protein biosynthesis. May increase the efficiency of translation by recycling ribosomes from one round of translation to another. The chain is Ribosome-recycling factor from Exiguobacterium sibiricum (strain DSM 17290 / CCUG 55495 / CIP 109462 / JCM 13490 / 255-15).